Here is a 277-residue protein sequence, read N- to C-terminus: Large ribosomal subunit protein uL2 (277 aa).

Positions 225 to 277 (MNPIDHPHGGGEGKTAAGRHPVSPWGTPSKGFRTRVNKRTDGMIVRRRYSNKG) are disordered.

The protein belongs to the universal ribosomal protein uL2 family. In terms of assembly, part of the 50S ribosomal subunit. Forms a bridge to the 30S subunit in the 70S ribosome.

In terms of biological role, one of the primary rRNA binding proteins. Required for association of the 30S and 50S subunits to form the 70S ribosome, for tRNA binding and peptide bond formation. It has been suggested to have peptidyltransferase activity; this is somewhat controversial. Makes several contacts with the 16S rRNA in the 70S ribosome. The protein is Large ribosomal subunit protein uL2 of Nitrosospira multiformis (strain ATCC 25196 / NCIMB 11849 / C 71).